A 357-amino-acid polypeptide reads, in one-letter code: Sorbitol dehydrogenase (357 aa).

Position 2 is an N-acetylalanine (Ala-2). Residue Cys-45 coordinates Zn(2+). Residue Tyr-51 participates in substrate binding. Zn(2+) is bound by residues His-70 and Glu-71. Glu-156 is a binding site for substrate. A Phosphoserine modification is found at Ser-169. Residues Val-184, Asp-204, Arg-209, 273–275 (VGM), and 297–299 (VFR) each bind NAD(+). Positions 299 and 300 each coordinate substrate.

The protein belongs to the zinc-containing alcohol dehydrogenase family. As to quaternary structure, homotetramer. The cofactor is Zn(2+). As to expression, testis has the highest level of expression, followed by kidney, liver, and lung. Low levels of expression are also observed in lens, brain, and skeletal muscle. Expressed in sperm flagellum and very low expression in the sperm head.

It localises to the mitochondrion membrane. The protein resides in the cell projection. Its subcellular location is the cilium. It is found in the flagellum. It carries out the reaction keto-D-fructose + NADH + H(+) = D-sorbitol + NAD(+). The catalysed reaction is xylitol + NAD(+) = D-xylulose + NADH + H(+). It catalyses the reaction L-iditol + NAD(+) = keto-L-sorbose + NADH + H(+). Its activity is regulated as follows. Inhibited in vitro by p-hydroxymercuribenzoate, EDTA, l,l0-phenanthroline and N-ethylmaleimide. Polyol dehydrogenase that catalyzes the reversible NAD(+)-dependent oxidation of various sugar alcohols. Is active with D-sorbitol (D-glucitol) leading to the C2-oxidized product D-fructose. Is a key enzyme in the polyol pathway that interconverts glucose and fructose via sorbitol, which constitutes an important alternate route for glucose metabolism. May play a role in sperm motility by using sorbitol as an alternative energy source for sperm motility and protein tyrosine phosphorylation. Has no activity on ethanol. Cannot use NADP(+) as the electron acceptor. This is Sorbitol dehydrogenase (Sord) from Mus musculus (Mouse).